We begin with the raw amino-acid sequence, 200 residues long: uncharacterized protein (200 aa).

An AMMECR1 domain is found at 1 to 191 (MTSANIQMAV…LDYKDYVNYK (191 aa)).

This is an uncharacterized protein from Caenorhabditis elegans.